The sequence spans 330 residues: uncharacterized protein (330 aa).

This is an uncharacterized protein from Schizosaccharomyces pombe (strain 972 / ATCC 24843) (Fission yeast).